The sequence spans 296 residues: Gamma-D-glutamyl-L-lysine dipeptidyl-peptidase (296 aa).

Residues Y90, 199 to 201 (DCS), and 218 to 219 (DA) each bind substrate. The 126-residue stretch at 170 to 295 (KGTAEDIIQT…ELCAVRRCFS (126 aa)) folds into the NlpC/P60 domain. C200 acts as the Nucleophile in catalysis. The Proton acceptor role is filled by H253. H265 is an active-site residue.

It belongs to the peptidase C40 family.

The enzyme catalyses The enzyme releases L-Ala-gamma-D-Glu dipeptides from cell wall peptides via cleavage of an L-Ala-gamma-D-Glu-|-L-Lys bond.. The protein operates within cell wall degradation; peptidoglycan degradation. Functionally, specifically hydrolyzes gamma-D-glutamyl-L-lysine bonds in murein peptides, releasing L-Ala-D-Glu. This Bacillus subtilis (strain 168) protein is Gamma-D-glutamyl-L-lysine dipeptidyl-peptidase (ykfC).